The primary structure comprises 274 residues: Undecaprenyl-diphosphatase (274 aa).

Transmembrane regions (helical) follow at residues Ala44–Trp64, Leu85–Ile105, Leu109–Ala129, Ala185–Leu205, Ala215–Val235, and Phe250–Val270.

This sequence belongs to the UppP family.

The protein resides in the cell inner membrane. The catalysed reaction is di-trans,octa-cis-undecaprenyl diphosphate + H2O = di-trans,octa-cis-undecaprenyl phosphate + phosphate + H(+). In terms of biological role, catalyzes the dephosphorylation of undecaprenyl diphosphate (UPP). Confers resistance to bacitracin. The chain is Undecaprenyl-diphosphatase from Acidovorax ebreus (strain TPSY) (Diaphorobacter sp. (strain TPSY)).